The following is a 194-amino-acid chain: Small ribosomal subunit protein eS7 (194 aa).

The protein belongs to the eukaryotic ribosomal protein eS7 family.

This Drosophila melanogaster (Fruit fly) protein is Small ribosomal subunit protein eS7 (RpS7).